The following is a 299-amino-acid chain: Homoserine O-acetyltransferase (299 aa).

The active-site Acyl-thioester intermediate is Cys142. Positions 163 and 192 each coordinate substrate. His235 functions as the Proton acceptor in the catalytic mechanism. Glu237 is an active-site residue. A substrate-binding site is contributed by Arg249.

The protein belongs to the MetA family.

It localises to the cytoplasm. The enzyme catalyses L-homoserine + acetyl-CoA = O-acetyl-L-homoserine + CoA. It functions in the pathway amino-acid biosynthesis; L-methionine biosynthesis via de novo pathway; O-acetyl-L-homoserine from L-homoserine: step 1/1. Transfers an acetyl group from acetyl-CoA to L-homoserine, forming acetyl-L-homoserine. This is Homoserine O-acetyltransferase from Synechococcus elongatus (strain ATCC 33912 / PCC 7942 / FACHB-805) (Anacystis nidulans R2).